We begin with the raw amino-acid sequence, 263 residues long: Hydroxyethylthiazole kinase (263 aa).

Residue Met45 participates in substrate binding. Arg121 and Ser167 together coordinate ATP. Gly194 is a binding site for substrate.

The protein belongs to the Thz kinase family. Requires Mg(2+) as cofactor.

The enzyme catalyses 5-(2-hydroxyethyl)-4-methylthiazole + ATP = 4-methyl-5-(2-phosphooxyethyl)-thiazole + ADP + H(+). Its pathway is cofactor biosynthesis; thiamine diphosphate biosynthesis; 4-methyl-5-(2-phosphoethyl)-thiazole from 5-(2-hydroxyethyl)-4-methylthiazole: step 1/1. In terms of biological role, catalyzes the phosphorylation of the hydroxyl group of 4-methyl-5-beta-hydroxyethylthiazole (THZ). In Vibrio parahaemolyticus serotype O3:K6 (strain RIMD 2210633), this protein is Hydroxyethylthiazole kinase.